The primary structure comprises 597 residues: Formate--tetrahydrofolate ligase (597 aa).

An ATP-binding site is contributed by 84-91 (TPLGEGKS).

This sequence belongs to the formate--tetrahydrofolate ligase family.

The catalysed reaction is (6S)-5,6,7,8-tetrahydrofolate + formate + ATP = (6R)-10-formyltetrahydrofolate + ADP + phosphate. It functions in the pathway one-carbon metabolism; tetrahydrofolate interconversion. This is Formate--tetrahydrofolate ligase from Dehalococcoides mccartyi (strain CBDB1).